We begin with the raw amino-acid sequence, 377 residues long: Actin-related protein T2 (377 aa).

This sequence belongs to the actin family.

It is found in the cytoplasm. It localises to the cytoskeleton. The polypeptide is Actin-related protein T2 (Actrt2) (Mus musculus (Mouse)).